The primary structure comprises 565 residues: MLLKGFMLSLVLYAVYHLASNGGQFMFDFSGQSKWERAQSEVRQAILDSWHTYEKYGWGYDVYHPIKQEGENMGPKPLGWMIVDSLDTLMIMDCPEEVSRARDWIKNDLDYTFDYNVNTFETTIRMLGGLLSAYHFSNDDVYLDKAVQLANALHGAYDSPSGIPYSSVNLKSGKGIKNHVDNGASSTAEAATVQLEMKYLSKLTGEILWWNLAEKVMQVLESNKPQDGLVPIYVNPDTGKYQGHLIRLGSRGDSYYEYLLKQYLQTNKQELVYWDMYRESVEGVKKHLVSDSYPSGLTFIGELDNGIGGKLSTKMDHLVCFYGGLLALGATGGLTLNEAQSLKSWNEEREADFKLGEELTYTCYKMYHDVSPTGLSPEIVVFNEDTSKSKDFIIKPLDRHNLQRPETVESLFYLYRLTGDVKYREMGYEIFQNFIKYTKVVNSEGEVSFSSLSDVTSFDSNGLPKFKDNTESFWWAETLKYLYLLFDDTNKIPLTDYVFNTEAHPFPRFDTNDYFKTGWRRKIDENEKAQMRESKVIDKSNLPEAQPVDKSADQEAKEIIEEIAG.

A disulfide bond links cysteine 320 and cysteine 363. Glutamate 378 serves as the catalytic Proton donor. Threonine 501 contributes to the Ca(2+) binding site. Basic and acidic residues-rich tracts occupy residues 526–538 (NEKA…KVID) and 550–565 (KSAD…EIAG). The segment at 526-565 (NEKAQMRESKVIDKSNLPEAQPVDKSADQEAKEIIEEIAG) is disordered.

The protein belongs to the glycosyl hydrolase 47 family. Ca(2+) is required as a cofactor.

The enzyme catalyses N(4)-(alpha-D-Man-(1-&gt;2)-alpha-D-Man-(1-&gt;2)-alpha-D-Man-(1-&gt;3)-[alpha-D-Man-(1-&gt;2)-alpha-D-Man-(1-&gt;3)-[alpha-D-Man-(1-&gt;2)-alpha-D-Man-(1-&gt;6)]-alpha-D-Man-(1-&gt;6)]-beta-D-Man-(1-&gt;4)-beta-D-GlcNAc-(1-&gt;4)-beta-D-GlcNAc)-L-asparaginyl-[protein] (N-glucan mannose isomer 9A1,2,3B1,2,3) + 4 H2O = N(4)-(alpha-D-Man-(1-&gt;3)-[alpha-D-Man-(1-&gt;3)-[alpha-D-Man-(1-&gt;6)]-alpha-D-Man-(1-&gt;6)]-beta-D-Man-(1-&gt;4)-beta-D-GlcNAc-(1-&gt;4)-beta-D-GlcNAc)-L-asparaginyl-[protein] (N-glucan mannose isomer 5A1,2) + 4 beta-D-mannose. The catalysed reaction is N(4)-(alpha-D-Man-(1-&gt;2)-alpha-D-Man-(1-&gt;2)-alpha-D-Man-(1-&gt;3)-[alpha-D-Man-(1-&gt;3)-[alpha-D-Man-(1-&gt;2)-alpha-D-Man-(1-&gt;6)]-alpha-D-Man-(1-&gt;6)]-beta-D-Man-(1-&gt;4)-beta-D-GlcNAc-(1-&gt;4)-beta-D-GlcNAc)-L-asparaginyl-[protein] (N-glucan mannose isomer 8A1,2,3B1,3) + 3 H2O = N(4)-(alpha-D-Man-(1-&gt;3)-[alpha-D-Man-(1-&gt;3)-[alpha-D-Man-(1-&gt;6)]-alpha-D-Man-(1-&gt;6)]-beta-D-Man-(1-&gt;4)-beta-D-GlcNAc-(1-&gt;4)-beta-D-GlcNAc)-L-asparaginyl-[protein] (N-glucan mannose isomer 5A1,2) + 3 beta-D-mannose. It participates in protein modification; protein glycosylation. Its function is as follows. Involved in the maturation of Asn-linked oligosaccharides. Trim a single alpha-1,2-linked mannose residue from Man(9)GlcNAc(2) to produce Man(8)GlcNAc(2). The chain is Mannosyl-oligosaccharide 1,2-alpha-mannosidase (MNS1) from Candida albicans (Yeast).